The primary structure comprises 718 residues: Mitotic spindle assembly checkpoint protein MAD1 (718 aa).

N-acetylmethionine is present on Met-1. Residue Ser-16 is modified to Phosphoserine. Residues 46–632 (QQSMQLEERA…QTKIQEFRKA (587 aa)) adopt a coiled-coil conformation. Lys-61 is modified (N6-acetyllysine; alternate). A Glycyl lysine isopeptide (Lys-Gly) (interchain with G-Cter in SUMO2); alternate cross-link involves residue Lys-61. The short motif at 79–82 (KRAR) is the Nuclear localization signal element. Ser-214 carries the post-translational modification Phosphoserine. The interval 301-340 (VGLELENERLLAKLQSWERLDQTMGLSIRTPEDLSRFVVE) is important for interaction with IK. The segment at 380-532 (LLEERKKRET…EAQLERRALQ (153 aa)) is necessary for interaction with NEK2. Residue Ser-428 is modified to Phosphoserine. Residues 439 to 480 (EDMVQKVHSHSAEMEAQLSQALEELGGQKQRADMLEMELKML) are important for interaction with IK. The tract at residues 540-551 (TKVLHMSLNPTS) is necessary for interaction with MAD2L1. Phosphoserine is present on residues Ser-598 and Ser-610. Phosphotyrosine is present on Tyr-634. At Thr-716 the chain carries Phosphothreonine.

This sequence belongs to the MAD1 family. As to quaternary structure, homodimer. Dimerizes via its N- and C- terminal regions. Heterodimerizes with MAD2L1 in order to form a tetrameric MAD1L1-MAD2L1 core complex. Interacts with the closed conformation form of MAD2L1 (C-MAD2) and open conformation form of MAD2L1 (O-MAD2). It is unclear whether MAD1L1 dimerization promotes the conversion of closed to open conformation of MAD2L1. Formation of a heterotetrameric core complex containing two molecules each of MAD1L1 and of MAD2L1 promotes binding of another molecule of MAD2L1 to each MAD2L1, resulting in a heterohexamer. Perturbation of the original MAD1L1-MAD2L1 structure by the spindle checkpoint may decrease MAD2L1 affinity for MAD1L1. CDC20 can compete with MAD1L1 for MAD2L1 binding, until the attachment and/or tension dampen the checkpoint signal, preventing further release of MAD2L1 on to CDC20. Also able to interact with the BUB1/BUB3 complex. Interacts with NEK2. Interacts with TTK. Interacts with TPR; the interactions occurs in a microtubule-independent manner. Interacts with IK. Interacts with the viral Tax protein. Interacts with PRAP1. In terms of assembly, interacts with MAD2L1; this interaction leads to the cytoplasmic sequestration of MAD2L1. Interacts with PRAP1. Post-translationally, phosphorylated; by BUB1. Become hyperphosphorylated in late S through M phases or after mitotic spindle damage. Phosphorylated; by TTK. As to expression, expressed in hepatocellular carcinomas and hepatoma cell lines (at protein level).

The protein resides in the nucleus. It is found in the chromosome. The protein localises to the centromere. Its subcellular location is the kinetochore. It localises to the nucleus envelope. The protein resides in the cytoplasm. It is found in the cytoskeleton. The protein localises to the microtubule organizing center. Its subcellular location is the centrosome. It localises to the spindle. The protein resides in the spindle pole. Component of the spindle-assembly checkpoint that prevents the onset of anaphase until all chromosomes are properly aligned at the metaphase plate. Forms a heterotetrameric complex with the closed conformation form of MAD2L1 (C-MAD2) at unattached kinetochores during prometaphase, recruits an open conformation of MAD2L1 (O-MAD2) and promotes the conversion of O-MAD2 to C-MAD2, which ensures mitotic checkpoint signaling. In terms of biological role, sequesters MAD2L1 in the cytoplasm preventing its function as an activator of the mitotic spindle assembly checkpoint (SAC) resulting in SAC impairment and chromosomal instability in hepatocellular carcinomas. This is Mitotic spindle assembly checkpoint protein MAD1 (MAD1L1) from Homo sapiens (Human).